The sequence spans 328 residues: 3-dehydroquinate synthase (328 aa).

This sequence belongs to the archaeal-type DHQ synthase family.

The enzyme catalyses 2-amino-2,3,7-trideoxy-D-lyxo-hept-6-ulosonate + NAD(+) + H2O = 3-dehydroquinate + NH4(+) + NADH + H(+). Its function is as follows. Catalyzes the oxidative deamination and cyclization of 2-amino-3,7-dideoxy-D-threo-hept-6-ulosonic acid (ADH) to yield 3-dehydroquinate (DHQ), which is fed into the canonical shikimic pathway of aromatic amino acid biosynthesis. This Methanosphaerula palustris (strain ATCC BAA-1556 / DSM 19958 / E1-9c) protein is 3-dehydroquinate synthase.